The chain runs to 324 residues: Acetyl-coenzyme A carboxylase carboxyl transferase subunit alpha (324 aa).

Positions 37–291 (KLERRLDKLK…QNFILQEWLR (255 aa)) constitute a CoA carboxyltransferase C-terminal domain.

Belongs to the AccA family. In terms of assembly, acetyl-CoA carboxylase is a heterohexamer composed of biotin carboxyl carrier protein (AccB), biotin carboxylase (AccC) and two subunits each of ACCase subunit alpha (AccA) and ACCase subunit beta (AccD).

It localises to the cytoplasm. It catalyses the reaction N(6)-carboxybiotinyl-L-lysyl-[protein] + acetyl-CoA = N(6)-biotinyl-L-lysyl-[protein] + malonyl-CoA. It functions in the pathway lipid metabolism; malonyl-CoA biosynthesis; malonyl-CoA from acetyl-CoA: step 1/1. In terms of biological role, component of the acetyl coenzyme A carboxylase (ACC) complex. First, biotin carboxylase catalyzes the carboxylation of biotin on its carrier protein (BCCP) and then the CO(2) group is transferred by the carboxyltransferase to acetyl-CoA to form malonyl-CoA. The polypeptide is Acetyl-coenzyme A carboxylase carboxyl transferase subunit alpha (Chlamydia caviae (strain ATCC VR-813 / DSM 19441 / 03DC25 / GPIC) (Chlamydophila caviae)).